Reading from the N-terminus, the 158-residue chain is Snaclec mucetin subunit alpha (158 aa).

The N-terminal stretch at 1 to 23 (MGRFTFVSFGLLVVFLSLSGTGA) is a signal peptide. Cystine bridges form between Cys27/Cys38, Cys55/Cys152, and Cys127/Cys144. Residues 34–153 (YDRYCYQAFS…CGRENPFVCK (120 aa)) form the C-type lectin domain.

This sequence belongs to the snaclec family. As to quaternary structure, dimer and tetramer of heterodimers of alpha and beta subunits ((alphabeta)(2) and (alphabeta)(4)); disulfide-linked. These two multimeric forms are found. The complex is glycosylated. Expressed by the venom gland.

It is found in the secreted. Its function is as follows. Potent platelet activator that acts via GPIb (GP1BA/GP1BB). After activation by the toxin, the receptor is redistributed on platelet surface thanks to cytoskeletal translocation. The indirect activation of integrin alpha-IIb/beta-3 (ITGA2B/ITGB3) also induced by the toxin is downstream the cytoskeletal translocation of GPIb. The sequence is that of Snaclec mucetin subunit alpha from Protobothrops mucrosquamatus (Taiwan habu).